The primary structure comprises 443 residues: D-alanyl-D-alanine carboxypeptidase DacA (443 aa).

The N-terminal stretch at 1 to 31 (MNIKKCKQLLMSLVVLTLAVTCLAPMSKAKA) is a signal peptide. The Acyl-ester intermediate role is filled by S67. K70 functions as the Proton acceptor in the catalytic mechanism. S131 is an active-site residue. K258 is a substrate binding site.

This sequence belongs to the peptidase S11 family.

Its subcellular location is the secreted. It localises to the cell wall. The protein resides in the cell membrane. The protein localises to the membrane raft. It catalyses the reaction Preferential cleavage: (Ac)2-L-Lys-D-Ala-|-D-Ala. Also transpeptidation of peptidyl-alanyl moieties that are N-acyl substituents of D-alanine.. It functions in the pathway cell wall biogenesis; peptidoglycan biosynthesis. Removes C-terminal D-alanyl residues from sugar-peptide cell wall precursors. The protein is D-alanyl-D-alanine carboxypeptidase DacA (dacA) of Bacillus subtilis (strain 168).